The chain runs to 167 residues: Mitochondrial inner membrane protease subunit 1 (167 aa).

Active-site residues include Ser-40 and Lys-83.

Belongs to the peptidase S26 family. IMP1 subfamily. In terms of assembly, heterodimer of 2 subunits, IMMPL1 and IMMPL2.

It localises to the mitochondrion inner membrane. Catalyzes the removal of transit peptides required for the targeting of proteins from the mitochondrial matrix, across the inner membrane, into the inter-membrane space. The chain is Mitochondrial inner membrane protease subunit 1 (immp1l) from Xenopus tropicalis (Western clawed frog).